The primary structure comprises 382 residues: DnaJ homolog dnj-20 (382 aa).

A signal peptide spans 1-21 (MRILNVSLLVLTAFLVDFVEC). The J domain maps to 24–89 (DFYKILGVSK…EKRAMYDRHG (66 aa)).

The chain is DnaJ homolog dnj-20 from Caenorhabditis briggsae.